The primary structure comprises 224 residues: ATP-dependent dethiobiotin synthetase BioD (224 aa).

Thr18 provides a ligand contact to Mg(2+). Lys39 is a catalytic residue. Ser43 contacts substrate. 2 residues coordinate Mg(2+): Asp56 and Glu117. Residues Asp56, Glu117–Gly120, and Asn177–Glu178 each bind ATP.

This sequence belongs to the dethiobiotin synthetase family. Homodimer. Requires Mg(2+) as cofactor.

The protein resides in the cytoplasm. The enzyme catalyses (7R,8S)-7,8-diammoniononanoate + CO2 + ATP = (4R,5S)-dethiobiotin + ADP + phosphate + 3 H(+). The protein operates within cofactor biosynthesis; biotin biosynthesis; biotin from 7,8-diaminononanoate: step 1/2. Functionally, catalyzes a mechanistically unusual reaction, the ATP-dependent insertion of CO2 between the N7 and N8 nitrogen atoms of 7,8-diaminopelargonic acid (DAPA, also called 7,8-diammoniononanoate) to form a ureido ring. The polypeptide is ATP-dependent dethiobiotin synthetase BioD (Xanthomonas axonopodis pv. citri (strain 306)).